We begin with the raw amino-acid sequence, 308 residues long: MVTYVSALFYGFGGIVVAGVALLVAFQEKLVYVPVLPGLSKSYPITPARLNLIYEDIWLQSSDGVRLHAWFIKMFPECRGPTILFFQENAGNIAHRLEMVRIMIQKLKCNVFMLSYRGYGASEGYPSQQGIIKDAQAALDHLSGRTDIDTSRIVVFGRSLGGAVGAVLTKNNPDKVSALILENTFTSILDMAGVLLPFLKWFIGGSGTKSLKLLNFVVRSPWKTIDAIAEIKQPVLFLSGLQDEMVPPFHMKMLYAKAAARNPQCTFVEFPSGMHMDTWLSGGEVYWKTNLQFLEKYAPEKRKEDTGR.

The helical transmembrane segment at 6–26 (SALFYGFGGIVVAGVALLVAF) threads the bilayer. Residues Ser-159, Asp-243, and Arg-308 each act as charge relay system in the active site.

It belongs to the serine esterase family. As to expression, expressed in roots, rosette leaves, stems and flowers.

The protein localises to the cell membrane. Involved in the regulation of root growth. Involved in the suppression of the root bending in response to touch stimuli, gravity and light. Negatively regulates stimulus-induced root bending through inhibition of root tip rotation. This chain is Alpha/beta hydrolase domain-containing protein WAV2, found in Arabidopsis thaliana (Mouse-ear cress).